The following is a 515-amino-acid chain: Putative ribose/galactose/methyl galactoside import ATP-binding protein (515 aa).

ABC transporter domains are found at residues 25–261 (LEVL…VGRE) and 268–515 (LREK…SGLN). 57–64 (GENGAGKS) lines the ATP pocket.

This sequence belongs to the ABC transporter superfamily. Carbohydrate importer 2 (CUT2) (TC 3.A.1.2) family.

It is found in the cell inner membrane. The catalysed reaction is D-ribose(out) + ATP + H2O = D-ribose(in) + ADP + phosphate + H(+). The enzyme catalyses D-galactose(out) + ATP + H2O = D-galactose(in) + ADP + phosphate + H(+). Functionally, part of an ABC transporter complex involved in carbohydrate import. Could be involved in ribose, galactose and/or methyl galactoside import. Responsible for energy coupling to the transport system. The polypeptide is Putative ribose/galactose/methyl galactoside import ATP-binding protein (Pseudomonas fluorescens (strain ATCC BAA-477 / NRRL B-23932 / Pf-5)).